The following is a 460-amino-acid chain: Signal recognition particle 54 kDa protein (460 aa).

GTP is bound by residues 104 to 111, 184 to 188, and 242 to 245; these read GLQGSGKT, DTAGR, and TKLD.

It belongs to the GTP-binding SRP family. SRP54 subfamily. In terms of assembly, part of the signal recognition particle protein translocation system, which is composed of SRP and FtsY. Archaeal SRP consists of a 7S RNA molecule of 300 nucleotides and two protein subunits: SRP54 and SRP19.

It localises to the cytoplasm. It carries out the reaction GTP + H2O = GDP + phosphate + H(+). Involved in targeting and insertion of nascent membrane proteins into the cytoplasmic membrane. Binds to the hydrophobic signal sequence of the ribosome-nascent chain (RNC) as it emerges from the ribosomes. The SRP-RNC complex is then targeted to the cytoplasmic membrane where it interacts with the SRP receptor FtsY. This chain is Signal recognition particle 54 kDa protein, found in Halobacterium salinarum (strain ATCC 29341 / DSM 671 / R1).